The primary structure comprises 113 residues: Pancreatic progenitor cell differentiation and proliferation factor B (113 aa).

This sequence belongs to the PPDPF family.

Its function is as follows. Probable regulator of exocrine pancreas development. The protein is Pancreatic progenitor cell differentiation and proliferation factor B (ppdpf-b) of Xenopus laevis (African clawed frog).